We begin with the raw amino-acid sequence, 101 residues long: Phosphoribosyl-AMP cyclohydrolase (101 aa).

Asp71 is a Mg(2+) binding site. Cys72 is a binding site for Zn(2+). The Mg(2+) site is built by Asp73 and Asp75. Zn(2+) contacts are provided by Cys88 and Cys95.

It belongs to the PRA-CH family. In terms of assembly, homodimer. Mg(2+) serves as cofactor. Zn(2+) is required as a cofactor.

The protein resides in the cytoplasm. The enzyme catalyses 1-(5-phospho-beta-D-ribosyl)-5'-AMP + H2O = 1-(5-phospho-beta-D-ribosyl)-5-[(5-phospho-beta-D-ribosylamino)methylideneamino]imidazole-4-carboxamide. It functions in the pathway amino-acid biosynthesis; L-histidine biosynthesis; L-histidine from 5-phospho-alpha-D-ribose 1-diphosphate: step 3/9. Catalyzes the hydrolysis of the adenine ring of phosphoribosyl-AMP. The chain is Phosphoribosyl-AMP cyclohydrolase from Bacillus cereus (strain ZK / E33L).